A 1013-amino-acid polypeptide reads, in one-letter code: Poly [ADP-ribose] polymerase 1 (1013 aa).

2 consecutive PARP-type zinc fingers follow at residues 10–92 and 113–203; these read YKAE…ESGG and FAVE…PAVK. 8 residues coordinate Zn(2+): Cys22, Cys25, His54, Cys57, Cys125, Cys128, His159, and Cys162. Residues 202 to 228 form a disordered region; the sequence is VKSEGKRKADEVDGGVSKKQKKEDEKL. The Nuclear localization signal signature appears at 207–209; sequence KRK. A PADR1 zinc-binding domain is found at 219–353; that stretch reads KKQKKEDEKL…FKRQDRVFPK (135 aa). The segment at 284–326 is zinc ribbon; the sequence is GSLKPCETCKGQLVFKSDAYYCTGDISAWTKCVFKTQTPDRKD. The Zn(2+) site is built by Cys289, Cys292, Cys305, and Cys315. Residues 353 to 385 form a disordered region; sequence KDAPPAAATPSSGSTTSAATSVSSASKNLTEAP. Low complexity predominate over residues 356-378; sequence PPAAATPSSGSTTSAATSVSSAS. Residues 365-523 form an automodification domain region; sequence GSTTSAATSV…EGGSKSKKMK (159 aa). The BRCT domain maps to 385–461; the sequence is PADKPLTGMK…RVVADDFLTD (77 aa). PolyADP-ribosyl glutamic acid is present on residues Glu413, Glu435, Glu444, Glu445, Glu464, Glu471, Glu484, and Glu488. Low complexity predominate over residues 494–507; that stretch reads AATKSTGAHSSKST. Residues 494–522 are disordered; it reads AATKSTGAHSSKSTGKVKEEEGGSKSKKM. 2 positions are modified to polyADP-ribosyl glutamic acid: Glu512 and Glu513. Residues 541-637 form the WGR domain; that stretch reads CAHVLEQNGK…SNFTKYPNKF (97 aa). Residues 661-778 form the PARP alpha-helical domain; sequence KSQLEKPVQD…DIEVAYSLLR (118 aa). Residues 787–1013 form the PARP catalytic domain; it reads DPIDINYEKL…IRFNYQTSLW (227 aa). NAD(+)-binding positions include 861-863, Gly870, Arg877, and Ser903; that span reads HGS. Glu987 (for poly [ADP-ribose] polymerase activity) is an active-site residue.

This sequence belongs to the ARTD/PARP family. In terms of assembly, homodimer; PARP-type zinc-fingers from separate parp1 molecules form a dimer module that specifically recognizes DNA strand breaks. In terms of processing, poly-ADP-ribosylated on serine, glutamate and aspartate residues by autocatalysis. Auto-ADP-ribosylation on serine takes place following interaction with HPF1. Auto poly-ADP-ribosylation on serine residues promotes its dissociation from chromatin.

The protein resides in the chromosome. Its subcellular location is the nucleus. The protein localises to the nucleolus. It is found in the cytoplasm. It localises to the cytosol. It carries out the reaction NAD(+) + (ADP-D-ribosyl)n-acceptor = nicotinamide + (ADP-D-ribosyl)n+1-acceptor + H(+).. It catalyses the reaction L-seryl-[protein] + NAD(+) = O-(ADP-D-ribosyl)-L-seryl-[protein] + nicotinamide + H(+). The catalysed reaction is L-aspartyl-[protein] + NAD(+) = 4-O-(ADP-D-ribosyl)-L-aspartyl-[protein] + nicotinamide. The enzyme catalyses L-glutamyl-[protein] + NAD(+) = 5-O-(ADP-D-ribosyl)-L-glutamyl-[protein] + nicotinamide. It carries out the reaction L-tyrosyl-[protein] + NAD(+) = O-(ADP-D-ribosyl)-L-tyrosyl-[protein] + nicotinamide + H(+). It catalyses the reaction L-histidyl-[protein] + NAD(+) = N(tele)-(ADP-D-ribosyl)-L-histidyl-[protein] + nicotinamide + H(+). ADP-ribosyltransferase activity is regulated via an allosteric activation mechanism. In absence of activation signal, parp1 is autoinhibited by the PARP alpha-helical domain (also named HD region), which prevents effective NAD(+)-binding. Activity is highly stimulated by signals, such as DNA strand breaks. Binding to damaged DNA unfolds the PARP alpha-helical domain, relieving autoinhibition. Poly-ADP-ribosyltransferase activity is tightly regulated and parp1 is removed from damaged chromatin following initial poly-ADP-ribosylation of chromatin to avoid prolonged residence (trapping) that has cytotoxic consequences. A number of factors or post-translational modifications (auto-poly-ADP-ribosylation) promote parp1 removal from chromatin. Poly-ADP-ribosyltransferase that mediates poly-ADP-ribosylation of proteins and plays a key role in DNA repair. Mediates glutamate, aspartate, serine, histidine or tyrosine ADP-ribosylation of proteins: the ADP-D-ribosyl group of NAD(+) is transferred to the acceptor carboxyl group of target residues and further ADP-ribosyl groups are transferred to the 2'-position of the terminal adenosine moiety, building up a polymer with an average chain length of 20-30 units. Serine ADP-ribosylation of proteins constitutes the primary form of ADP-ribosylation of proteins in response to DNA damage. Specificity for the different amino acids is conferred by interacting factors, such as hpf1 and nmnat1. Following interaction with hpf1, catalyzes serine ADP-ribosylation of target proteins; hpf1 confers serine specificity by completing the parp1 active site. Also catalyzes tyrosine ADP-ribosylation of target proteins following interaction with hpf1. Following interaction with nmnat1, catalyzes glutamate and aspartate ADP-ribosylation of target proteins; nmnat1 confers glutamate and aspartate specificity. Parp1 initiates the repair of DNA breaks: recognizes and binds DNA breaks within chromatin and recruits hpf1, licensing serine ADP-ribosylation of target proteins, such as histones (H2BS6ADPr and H3S10ADPr), thereby promoting decompaction of chromatin and the recruitment of repair factors leading to the reparation of DNA strand breaks. In addition to base excision repair (BER) pathway, also involved in double-strand breaks (DSBs) repair. Mediates the poly-ADP-ribosylation of a number of proteins. In addition to proteins, also able to ADP-ribosylate DNA: catalyzes ADP-ribosylation of DNA strand break termini containing terminal phosphates and a 2'-OH group in single- and double-stranded DNA, respectively. Parp1-mediated DNA repair in neurons plays a role in sleep: senses DNA damage in neurons and promotes sleep, facilitating efficient DNA repair. In addition to DNA repair, also involved in other processes, such as transcription regulation, programmed cell death, membrane repair, adipogenesis and innate immunity. Acts as a repressor of transcription: binds to nucleosomes and modulates chromatin structure in a manner similar to histone H1, thereby altering RNA polymerase II. Acts both as a positive and negative regulator of transcription elongation, depending on the context. Poly-ADP-ribose chains generated by parp1 also play a role in poly-ADP-ribose-dependent cell death, a process named parthanatos. Also acts as a negative regulator of the cGAS-STING pathway by mediating poly-ADP-ribosylation and inactivation of cgas. Acts as a negative regulator of adipogenesis by catalyzing poly ADP-ribosylation of histone H2B on 'Glu-35' (H2BE35ADPr). This chain is Poly [ADP-ribose] polymerase 1, found in Danio rerio (Zebrafish).